A 96-amino-acid chain; its full sequence is Accessory cholera enterotoxin (96 aa).

The chain crosses the membrane as a helical span at residues 76-96 (QALAIVLQALMTRFALRALNL).

It is found in the secreted. Its subcellular location is the host cell membrane. Functionally, increases short-circuit current in rabbit ileal tissue mounted in Ussing chambers, by increasing the potential difference. Cultures of V.cholerae containing the cloned ace gene cause fluid secretion in ligated rabbit ileal loops. The polypeptide is Accessory cholera enterotoxin (ace) (Vibrio cholerae serotype O1 (strain ATCC 39315 / El Tor Inaba N16961)).